The primary structure comprises 206 residues: Superoxide dismutase [Mn] (206 aa).

4 residues coordinate Mn(2+): His-27, His-82, Asp-168, and His-172.

Belongs to the iron/manganese superoxide dismutase family. In terms of assembly, homodimer. Mn(2+) is required as a cofactor.

The catalysed reaction is 2 superoxide + 2 H(+) = H2O2 + O2. Destroys superoxide anion radicals which are normally produced within the cells and which are toxic to biological systems. This chain is Superoxide dismutase [Mn] (sodA), found in Escherichia coli O157:H7.